A 434-amino-acid polypeptide reads, in one-letter code: Putative nuclease OPG089 (434 aa).

Belongs to the XPG/RAD2 endonuclease family. FEN1 subfamily. Mg(2+) serves as cofactor.

The protein localises to the virion. In terms of biological role, putative nuclease that seems to be required for double-strand break repair, homologous recombination, and production of full-length viral genomic DNA. This chain is Putative nuclease OPG089 (OPG089), found in Monkeypox virus.